A 187-amino-acid chain; its full sequence is Elongation factor P (187 aa).

Belongs to the elongation factor P family.

The protein localises to the cytoplasm. Its pathway is protein biosynthesis; polypeptide chain elongation. Involved in peptide bond synthesis. Stimulates efficient translation and peptide-bond synthesis on native or reconstituted 70S ribosomes in vitro. Probably functions indirectly by altering the affinity of the ribosome for aminoacyl-tRNA, thus increasing their reactivity as acceptors for peptidyl transferase. The protein is Elongation factor P of Nocardioides sp. (strain ATCC BAA-499 / JS614).